Consider the following 444-residue polypeptide: MTQITPTCAPPPGPTITDRTSLRLSKAIAGKSRGWKTGLLFAGPAVIASIAYVDPGNFATNIQAGSRYGYTLLWVVAAANLIAMLFQALSAKLGIATGRNLPELCRDHFSRPLVIALWIISEIAAMATDLAEFLGGAIGLALLFRLPLIIGMVATAMITFALLLFEKRGYRVMELVIGALVATIGLCYLAEMFIAPVDWTAAAWATITPRLPDATALTIATGIVGATVMPHAVYLHSGLAQNRAAAATDDASRHRLIRFSNREVILALALAGMVNMAMVIMAASAFHIGHSDVAEIEQAYHTLTPLLGAAAAAIFLISLITSGISSSVVGTMAGQMIMQGFVHIRIPVWLRRLVTMVPAFIVILAGVNATDALVISQVILSIALPAPMIALIYFSGHRELMGPFVNHRVTQWVASAAAAIVLGLNMVLLIQAFGFTIPGLPVAP.

11 helical membrane passes run 39 to 59 (LLFAGPAVIASIAYVDPGNFA), 69 to 89 (GYTLLWVVAAANLIAMLFQAL), 109 to 128 (FSRPLVIALWIISEIAAMAT), 146 to 166 (LPLIIGMVATAMITFALLLFE), 175 to 195 (LVIGALVATIGLCYLAEMFIA), 215 to 235 (TALTIATGIVGATVMPHAVYL), 264 to 284 (VILALALAGMVNMAMVIMAAS), 304 to 324 (TPLLGAAAAAIFLISLITSGI), 346 to 366 (IPVWLRRLVTMVPAFIVILAG), 372 to 392 (ALVISQVILSIALPAPMIALI), and 417 to 437 (AAAIVLGLNMVLLIQAFGFTI).

This sequence belongs to the NRAMP family.

Its subcellular location is the cell inner membrane. H(+)-stimulated, divalent metal cation uptake system. This chain is Divalent metal cation transporter MntH, found in Granulibacter bethesdensis (strain ATCC BAA-1260 / CGDNIH1).